The primary structure comprises 122 residues: Large ribosomal subunit protein bL12 (122 aa).

The protein belongs to the bacterial ribosomal protein bL12 family. In terms of assembly, homodimer. Part of the ribosomal stalk of the 50S ribosomal subunit. Forms a multimeric L10(L12)X complex, where L10 forms an elongated spine to which 2 to 4 L12 dimers bind in a sequential fashion. Binds GTP-bound translation factors.

In terms of biological role, forms part of the ribosomal stalk which helps the ribosome interact with GTP-bound translation factors. Is thus essential for accurate translation. In Mycoplasma mycoides subsp. mycoides SC (strain CCUG 32753 / NCTC 10114 / PG1), this protein is Large ribosomal subunit protein bL12.